We begin with the raw amino-acid sequence, 154 residues long: Probable chemoreceptor glutamine deamidase CheD (154 aa).

This sequence belongs to the CheD family.

The catalysed reaction is L-glutaminyl-[protein] + H2O = L-glutamyl-[protein] + NH4(+). In terms of biological role, probably deamidates glutamine residues to glutamate on methyl-accepting chemotaxis receptors (MCPs), playing an important role in chemotaxis. This chain is Probable chemoreceptor glutamine deamidase CheD, found in Methanococcus maripaludis (strain DSM 14266 / JCM 13030 / NBRC 101832 / S2 / LL).